A 396-amino-acid polypeptide reads, in one-letter code: Anhydro-N-acetylmuramic acid kinase (396 aa).

19–26 (GTSADGID) is an ATP binding site.

Belongs to the anhydro-N-acetylmuramic acid kinase family.

The catalysed reaction is 1,6-anhydro-N-acetyl-beta-muramate + ATP + H2O = N-acetyl-D-muramate 6-phosphate + ADP + H(+). Its pathway is amino-sugar metabolism; 1,6-anhydro-N-acetylmuramate degradation. The protein operates within cell wall biogenesis; peptidoglycan recycling. Its function is as follows. Catalyzes the specific phosphorylation of 1,6-anhydro-N-acetylmuramic acid (anhMurNAc) with the simultaneous cleavage of the 1,6-anhydro ring, generating MurNAc-6-P. Is required for the utilization of anhMurNAc either imported from the medium or derived from its own cell wall murein, and thus plays a role in cell wall recycling. This Colwellia psychrerythraea (strain 34H / ATCC BAA-681) (Vibrio psychroerythus) protein is Anhydro-N-acetylmuramic acid kinase.